The sequence spans 67 residues: Kappa-conotoxin-like Em11.8 (67 aa).

A signal peptide spans 1-26; that stretch reads MMFRLTSVSCFLLVIACLNLFQVVLT. Cystine bridges form between Cys29-Cys43, Cys36-Cys48, Cys42-Cys51, and Cys47-Cys55. Phenylalanine amide is present on Phe59. The propeptide occupies 63-67; sequence ATFQE.

Belongs to the conotoxin I2 superfamily. Expressed by the venom duct.

It is found in the secreted. Its function is as follows. Inhibits the vertebrate voltage-gated potassium channels Kv1.1/KCNA1 and Kv1.3/KCNA3. The polypeptide is Kappa-conotoxin-like Em11.8 (Conus emaciatus (False virgin cone)).